A 274-amino-acid chain; its full sequence is Pyrroline-5-carboxylate reductase 3 (274 aa).

An N-acetylalanine modification is found at Ala2.

Belongs to the pyrroline-5-carboxylate reductase family. In terms of assembly, homodecamer; composed of 5 homodimers.

The protein localises to the cytoplasm. It carries out the reaction L-proline + NADP(+) = (S)-1-pyrroline-5-carboxylate + NADPH + 2 H(+). It catalyses the reaction L-proline + NAD(+) = (S)-1-pyrroline-5-carboxylate + NADH + 2 H(+). Its pathway is amino-acid biosynthesis; L-proline biosynthesis; L-proline from L-glutamate 5-semialdehyde: step 1/1. Its function is as follows. Oxidoreductase that catalyzes the last step in proline biosynthesis, which corresponds to the reduction of pyrroline-5-carboxylate (P5C) to L-proline using NAD(P)H. Proline is synthesized from either glutamate or ornithine; both are converted to P5C, and then to proline via pyrroline-5-carboxylate reductases (PYCRs). PYCR3 is exclusively linked to the biosynthesis of proline from ornithine. The polypeptide is Pyrroline-5-carboxylate reductase 3 (Rattus norvegicus (Rat)).